Here is a 562-residue protein sequence, read N- to C-terminus: ATP-dependent RNA helicase dbp2 (562 aa).

The short motif at 132-160 (ETFDEAGFPRYVMDEVKAQGFPAPTAIQS) is the Q motif element. One can recognise a Helicase ATP-binding domain in the interval 163 to 338 (WPMALSGRDV…ADFLTDFIQV (176 aa)). ATP is bound at residue 176–183 (AETGSGKT). A DEAD box motif is present at residues 286–289 (DEAD). The Helicase C-terminal domain maps to 370-515 (HLEKIMEGRE…QIDPRLAEMA (146 aa)). Residues 526-548 (GGYRGRGGGGWRGGRGGGGGGGS) form an RNA-binding RGG-box region. Residues 536–550 (WRGGRGGGGGGGSVG) show a composition bias toward gly residues. Residues 536–562 (WRGGRGGGGGGGSVGGANALPLNNRRW) are disordered.

It belongs to the DEAD box helicase family. DDX5/DBP2 subfamily. In terms of assembly, associates with polysomes.

The protein localises to the cytoplasm. It localises to the nucleus. It carries out the reaction ATP + H2O = ADP + phosphate + H(+). Its function is as follows. ATP-dependent RNA helicase involved nonsense-mediated mRNA decay and ribosome biogenesis through rRNA processing. The protein is ATP-dependent RNA helicase dbp2 (drh-1) of Neurospora crassa (strain ATCC 24698 / 74-OR23-1A / CBS 708.71 / DSM 1257 / FGSC 987).